The following is a 212-amino-acid chain: MLPDLSIEHDLQRRGYANLAGIDEAGRGCWAGPVVAAAVVLSPAVYRQPDLLAGVNDSKQLTAGARERIYTSIQTHALGVGVGIVPAFLIDAYGILPATRLAMIQALLALPCAVDALIIDAVQLPGISLPQTALVRGDERSLSIAAASIIAKVTRDRLMATADHCFPHYGFALHKGYGTAVHRRALAQYGPSPLHRRTFQPVIEALLSLEQS.

The RNase H type-2 domain occupies 17-211 (ANLAGIDEAG…VIEALLSLEQ (195 aa)). The a divalent metal cation site is built by D23, E24, and D120.

This sequence belongs to the RNase HII family. It depends on Mn(2+) as a cofactor. Mg(2+) serves as cofactor.

The protein resides in the cytoplasm. The enzyme catalyses Endonucleolytic cleavage to 5'-phosphomonoester.. Endonuclease that specifically degrades the RNA of RNA-DNA hybrids. This is Ribonuclease HII from Chloroflexus aurantiacus (strain ATCC 29364 / DSM 637 / Y-400-fl).